A 249-amino-acid chain; its full sequence is tRNA uridine(34) hydroxylase (249 aa).

Residues 124 to 218 (TKQDVIVIDT…YLEDTQNKNN (95 aa)) enclose the Rhodanese domain. Catalysis depends on Cys-178, which acts as the Cysteine persulfide intermediate.

This sequence belongs to the TrhO family.

It carries out the reaction uridine(34) in tRNA + AH2 + O2 = 5-hydroxyuridine(34) in tRNA + A + H2O. In terms of biological role, catalyzes oxygen-dependent 5-hydroxyuridine (ho5U) modification at position 34 in tRNAs. The polypeptide is tRNA uridine(34) hydroxylase (Rickettsia canadensis (strain McKiel)).